A 772-amino-acid chain; its full sequence is Mitochondrial intermediate peptidase (772 aa).

A mitochondrion-targeting transit peptide spans 1–37 (MLRTIILKAGSNASIPSPSRQNKLLRFFATAGAVSRT). His558 is a Zn(2+) binding site. Residue Glu559 is part of the active site. Zn(2+) is bound by residues His562 and Glu587.

Belongs to the peptidase M3 family. Requires Zn(2+) as cofactor.

It localises to the mitochondrion matrix. The enzyme catalyses Release of an N-terminal octapeptide as second stage of processing of some proteins imported into the mitochondrion.. With respect to regulation, stimulated by Fe(2+). Its function is as follows. Cleaves proteins, imported into the mitochondrion, to their mature size. While most mitochondrial precursor proteins are processed to the mature form in one step by mitochondrial processing peptidase (MPP), the sequential cleavage by MIP of an octapeptide after initial processing by MPP is a required step for a subgroup of nuclear-encoded precursor proteins destined for the matrix or the inner membrane. Cleaves precursor proteins of respiratory components, including subunits of the electron transport chain and tricarboxylic acid cycle enzymes, and components of the mitochondrial genetic machinery, including ribosomal proteins, translation factors, and proteins required for mitochondrial DNA metabolism. The sequence is that of Mitochondrial intermediate peptidase (OCT1) from Saccharomyces cerevisiae (strain ATCC 204508 / S288c) (Baker's yeast).